The primary structure comprises 375 residues: Succinyl-diaminopimelate desuccinylase (375 aa).

His-66 provides a ligand contact to Zn(2+). The active site involves Asp-68. Asp-99 is a Zn(2+) binding site. Catalysis depends on Glu-133, which acts as the Proton acceptor. Residues Glu-134, Glu-162, and His-348 each coordinate Zn(2+).

The protein belongs to the peptidase M20A family. DapE subfamily. In terms of assembly, homodimer. Zn(2+) is required as a cofactor. The cofactor is Co(2+).

The catalysed reaction is N-succinyl-(2S,6S)-2,6-diaminopimelate + H2O = (2S,6S)-2,6-diaminopimelate + succinate. Its pathway is amino-acid biosynthesis; L-lysine biosynthesis via DAP pathway; LL-2,6-diaminopimelate from (S)-tetrahydrodipicolinate (succinylase route): step 3/3. Catalyzes the hydrolysis of N-succinyl-L,L-diaminopimelic acid (SDAP), forming succinate and LL-2,6-diaminopimelate (DAP), an intermediate involved in the bacterial biosynthesis of lysine and meso-diaminopimelic acid, an essential component of bacterial cell walls. This Enterobacter sp. (strain 638) protein is Succinyl-diaminopimelate desuccinylase.